A 309-amino-acid polypeptide reads, in one-letter code: tRNA-cytidine(32) 2-sulfurtransferase (309 aa).

The PP-loop motif signature appears at 47–52; the sequence is SGGKDS. [4Fe-4S] cluster is bound by residues Cys122, Cys125, and Cys213.

The protein belongs to the TtcA family. As to quaternary structure, homodimer. The cofactor is Mg(2+). [4Fe-4S] cluster is required as a cofactor.

The protein localises to the cytoplasm. The catalysed reaction is cytidine(32) in tRNA + S-sulfanyl-L-cysteinyl-[cysteine desulfurase] + AH2 + ATP = 2-thiocytidine(32) in tRNA + L-cysteinyl-[cysteine desulfurase] + A + AMP + diphosphate + H(+). The protein operates within tRNA modification. Its function is as follows. Catalyzes the ATP-dependent 2-thiolation of cytidine in position 32 of tRNA, to form 2-thiocytidine (s(2)C32). The sulfur atoms are provided by the cysteine/cysteine desulfurase (IscS) system. In Erwinia tasmaniensis (strain DSM 17950 / CFBP 7177 / CIP 109463 / NCPPB 4357 / Et1/99), this protein is tRNA-cytidine(32) 2-sulfurtransferase.